Consider the following 338-residue polypeptide: UDP-3-O-acylglucosamine N-acyltransferase (338 aa).

Catalysis depends on histidine 239, which acts as the Proton acceptor.

Belongs to the transferase hexapeptide repeat family. LpxD subfamily. As to quaternary structure, homotrimer.

The enzyme catalyses a UDP-3-O-[(3R)-3-hydroxyacyl]-alpha-D-glucosamine + a (3R)-hydroxyacyl-[ACP] = a UDP-2-N,3-O-bis[(3R)-3-hydroxyacyl]-alpha-D-glucosamine + holo-[ACP] + H(+). It participates in bacterial outer membrane biogenesis; LPS lipid A biosynthesis. Functionally, catalyzes the N-acylation of UDP-3-O-acylglucosamine using 3-hydroxyacyl-ACP as the acyl donor. Is involved in the biosynthesis of lipid A, a phosphorylated glycolipid that anchors the lipopolysaccharide to the outer membrane of the cell. This is UDP-3-O-acylglucosamine N-acyltransferase from Xylella fastidiosa (strain 9a5c).